Consider the following 375-residue polypeptide: Protein HrmA (375 aa).

Functionally, unknown. May serve a regulatory function. In Pseudomonas syringae pv. syringae, this protein is Protein HrmA (hrmA).